A 185-amino-acid chain; its full sequence is Peptide deformylase (185 aa).

2 residues coordinate Fe cation: Cys94 and His136. Residue Glu137 is part of the active site. His140 contacts Fe cation.

It belongs to the polypeptide deformylase family. Fe(2+) is required as a cofactor.

The enzyme catalyses N-terminal N-formyl-L-methionyl-[peptide] + H2O = N-terminal L-methionyl-[peptide] + formate. Removes the formyl group from the N-terminal Met of newly synthesized proteins. Requires at least a dipeptide for an efficient rate of reaction. N-terminal L-methionine is a prerequisite for activity but the enzyme has broad specificity at other positions. In Chlorobium phaeobacteroides (strain BS1), this protein is Peptide deformylase.